The sequence spans 253 residues: Succinate dehydrogenase [ubiquinone] iron-sulfur subunit, mitochondrial (253 aa).

Residues 23 to 114 form the 2Fe-2S ferredoxin-type domain; the sequence is FKIYRWNPDK…TTKIYPLPHM (92 aa). Residues Cys74, Cys79, Cys82, and Cys94 each contribute to the [2Fe-2S] cluster site. Residues 156–186 enclose the 4Fe-4S ferredoxin-type domain; that stretch reads DRKKLDGLYECILCACCSTSCPSYWWNQEEY. Residues Cys166, Cys169, and Cys172 each contribute to the [4Fe-4S] cluster site. Cys176 lines the [3Fe-4S] cluster pocket. A ubiquinone is bound at residue Trp181. Residues Cys223 and Cys229 each contribute to the [3Fe-4S] cluster site. Cys233 is a binding site for [4Fe-4S] cluster.

This sequence belongs to the succinate dehydrogenase/fumarate reductase iron-sulfur protein family. As to quaternary structure, component of complex II composed of four subunits: a flavoprotein (FP), an iron-sulfur protein (IP), and a cytochrome b composed of a large and a small subunit. [2Fe-2S] cluster is required as a cofactor. Requires [3Fe-4S] cluster as cofactor. The cofactor is [4Fe-4S] cluster.

The protein resides in the mitochondrion inner membrane. The catalysed reaction is a quinone + succinate = fumarate + a quinol. It functions in the pathway carbohydrate metabolism; tricarboxylic acid cycle; fumarate from succinate (eukaryal route): step 1/1. Iron-sulfur protein (IP) subunit of succinate dehydrogenase (SDH) that is involved in complex II of the mitochondrial electron transport chain and is responsible for transferring electrons from succinate to ubiquinone (coenzyme Q). This chain is Succinate dehydrogenase [ubiquinone] iron-sulfur subunit, mitochondrial (SDH2), found in Candida glabrata (strain ATCC 2001 / BCRC 20586 / JCM 3761 / NBRC 0622 / NRRL Y-65 / CBS 138) (Yeast).